Consider the following 51-residue polypeptide: MEKRELYELKDNKIVRKRRFCPRCGPGVFLAEHEDRFSCGRCGYTEFKRKN.

4 residues coordinate Zn(2+): C21, C24, C39, and C42. The C4-type zinc-finger motif lies at 21 to 42 (CPRCGPGVFLAEHEDRFSCGRC).

This sequence belongs to the eukaryotic ribosomal protein eS31 family. As to quaternary structure, part of the 30S ribosomal subunit. The cofactor is Zn(2+).

The chain is Small ribosomal subunit protein eS31 from Picrophilus torridus (strain ATCC 700027 / DSM 9790 / JCM 10055 / NBRC 100828 / KAW 2/3).